Here is an 87-residue protein sequence, read N- to C-terminus: Large ribosomal subunit protein bL31B (87 aa).

It belongs to the bacterial ribosomal protein bL31 family. Type B subfamily. As to quaternary structure, part of the 50S ribosomal subunit.

This is Large ribosomal subunit protein bL31B from Ralstonia nicotianae (strain ATCC BAA-1114 / GMI1000) (Ralstonia solanacearum).